The following is a 259-amino-acid chain: Haloacid dehalogenase-like hydrolase domain-containing protein 2 (259 aa).

The Mg(2+) site is built by D13 and S15. Substrate contacts are provided by residues 13 to 15 (DLS) and 46 to 47 (TN). Residues 47–71 (NTTKESKQDLLERLRKLEFDISEDE) are a coiled coil. K50 is subject to N6-succinyllysine. Position 179 (K179) interacts with substrate. Residue D204 coordinates Mg(2+).

The protein belongs to the HAD-like hydrolase superfamily. Requires Mg(2+) as cofactor.

The sequence is that of Haloacid dehalogenase-like hydrolase domain-containing protein 2 (HDHD2) from Homo sapiens (Human).